A 119-amino-acid chain; its full sequence is MMLEFAPIFIYLVISLLVSLILLGVPFLFASNSSTYPEKLSAYECGFDPFGDARSRFDIRFYLVSILFLIFDLEVTFFFPWAVSLNKIDLFGFWSMMAFLFILTIGFLYEWKRGALDWE.

Transmembrane regions (helical) follow at residues 8–28 (IFIYLVISLLVSLILLGVPFL), 63–83 (LVSILFLIFDLEVTFFFPWAV), and 88–108 (IDLFGFWSMMAFLFILTIGFL).

The protein belongs to the complex I subunit 3 family.

The protein resides in the mitochondrion membrane. It catalyses the reaction a ubiquinone + NADH + 5 H(+)(in) = a ubiquinol + NAD(+) + 4 H(+)(out). Functionally, core subunit of the mitochondrial membrane respiratory chain NADH dehydrogenase (Complex I) that is believed to belong to the minimal assembly required for catalysis. Complex I functions in the transfer of electrons from NADH to the respiratory chain. The immediate electron acceptor for the enzyme is believed to be ubiquinone. The polypeptide is NADH-ubiquinone oxidoreductase chain 3 (ND3) (Brassica napus (Rape)).